The following is a 289-amino-acid chain: F-box protein PP2-A11 (289 aa).

In terms of domain architecture, F-box spans 23 to 69; it reads QPGLGDLPESCVALILQNLDPVEICRFSKLNTAFHGASWADFVWESK.

In terms of assembly, part of a SCF (ASK-cullin-F-box) protein ligase complex. Interacts with SKP1A/ASK1.

Its subcellular location is the nucleus. Its pathway is protein modification; protein ubiquitination. Component of SCF(ASK-cullin-F-box) E3 ubiquitin ligase complexes, which may mediate the ubiquitination and subsequent proteasomal degradation of target proteins. In Arabidopsis thaliana (Mouse-ear cress), this protein is F-box protein PP2-A11 (PP2A11).